Reading from the N-terminus, the 678-residue chain is Growth arrest-specific protein 6 (678 aa).

A signal peptide spans 1–30; sequence MAPSLSPGPAALRRAPQLLLLLLAAECALA. One can recognise a Gla domain in the interval 53-94; the sequence is FEEAKQGHLERECVEELCSREEAREVFENDPETDYFYPRYLD. A disulfide bond links C65 and C70. Residue S71 is modified to Phosphoserine; by FAM20C. The region spanning 116–154 is the EGF-like 1; calcium-binding domain; it reads LPDQCTPNPCDRKGTQACQDLMGNFFCLCKAGWGGRLCD. 14 cysteine pairs are disulfide-bonded: C120–C133, C125–C142, C144–C153, C160–C171, C167–C180, C182–C195, C201–C212, C207–C221, C223–C236, C242–C251, C247–C260, C262–C277, C283–C570, and C444–C470. The 41-residue stretch at 156–196 folds into the EGF-like 2; calcium-binding domain; sequence DVNECSQENGGCLQICHNKPGSFHCSCHSGFELSSDGRTCQ. The 41-residue stretch at 197–237 folds into the EGF-like 3; calcium-binding domain; sequence DIDECADSEACGEARCKNLPGSYSCLCDEGFAYSSQEKACR. One can recognise an EGF-like 4; calcium-binding domain in the interval 238–278; that stretch reads DVDECLQGRCEQVCVNSPGSYTCHCDGRGGLKLSQDMDTCE. 2 consecutive Laminin G-like domains span residues 298–470 and 477–670; these read GRMF…RMQC and GSFY…AHSC. D329 and E331 together coordinate Ca(2+). N420 carries N-linked (GlcNAc...) asparagine glycosylation. R440 is a Ca(2+) binding site. Residues T621 and T637 each carry the phosphothreonine modification. The residue at position 640 (Y640) is a Phosphotyrosine. C643 and C670 are joined by a disulfide. D656 lines the Ca(2+) pocket.

Heterodimer and heterotetramer with AXL. Post-translationally, proteolytically processed after secretion to yield a N-terminal 36 kDa protein and a C-terminal 50 kDa protein including the laminin G-like domains which activates AXL. In terms of processing, gamma-carboxyglutamate residues are formed by vitamin K dependent carboxylation. These residues are essential for the binding of calcium. Plasma. Isoform 1 and isoform 2 are widely expressed, isoform 1 being expressed at higher levels than isoform 2 in most tissues. Isoform 2 is the predominant form in spleen.

It localises to the secreted. Its function is as follows. Ligand for tyrosine-protein kinase receptors AXL, TYRO3 and MER whose signaling is implicated in cell growth and survival, cell adhesion and cell migration. GAS6/AXL signaling plays a role in various processes such as endothelial cell survival during acidification by preventing apoptosis, optimal cytokine signaling during human natural killer cell development, hepatic regeneration, gonadotropin-releasing hormone neuron survival and migration, platelet activation, or regulation of thrombotic responses. (Microbial infection) Can bridge virus envelope phosphatidylserine to the TAM receptor tyrosine kinase Axl to mediate viral entry by apoptotic mimicry. Plays a role in Dengue cell entry by apoptotic mimicry. Plays a role in Vaccinia virus cell entry by apoptotic mimicry. Plays a role in ebolavirus and marburgvirus cell entry by apoptotic mimicry. In Homo sapiens (Human), this protein is Growth arrest-specific protein 6.